The following is a 415-amino-acid chain: MLNDECSILLIDDDVDVLDAYTQMLEQAGYRVRGFTHPFEAKEWVKADWEGIVLSDVCMPGCSGIDLMTLFHQDDDQLPILLITGHGDVPMAVDAVKKGAWDFLQKPVDPGKLLILIEDALRQRRSVIARRQYCQQTLQVELIGRSEWMNQFRQRLQQLAETDIAVWFYGEHGTGRMTGARYLHQLGRNAKGPFVRYELTPENAGQLETFIDQAQGGTLVLSHPEYLTREQQHHLARLQSLEHRPFRLVGVGSASLVEQAAANQIAAELYYCFAMTQIACQSLSQRPDDIEPLFRHYLRKACLRLNHPVPEIAGELLKGIMRRAWPSNVRELANAAELFAVGVLPLAETVNPQLLLQEPTPLDRRVEEYERQIITEALNIHQGRINEVAEYLQIPRKKLYLRMKKYGLSKEHYKF.

A Response regulatory domain is found at 7-121 (SILLIDDDVD…KLLILIEDAL (115 aa)). Asp56 is subject to 4-aspartylphosphate. Positions 142–341 (LIGRSEWMNQ…LANAAELFAV (200 aa)) constitute a Sigma-54 factor interaction domain. An ATP-binding site is contributed by 170-177 (GEHGTGRM). Positions 385–404 (INEVAEYLQIPRKKLYLRMK) form a DNA-binding region, H-T-H motif.

Phosphorylated by PgtB.

Its subcellular location is the cytoplasm. Functionally, member of the two-component regulatory system PgtB/PgtA that regulates the inducible phosphoglycerate transport system. When activated by PgtB it acts in conjunction with sigma-54 as a transcriptional activator. The protein is Phosphoglycerate transport system transcriptional regulatory protein PgtA (pgtA) of Salmonella typhimurium (strain LT2 / SGSC1412 / ATCC 700720).